A 1687-amino-acid chain; its full sequence is Gag-Pol polyprotein (1687 aa).

Gly-2 is lipidated: N-myristoyl glycine; by host. Disordered regions lie at residues 107-126 (GQDN…SRLP), 136-195 (LLSE…STVA), 420-447 (HKRE…DRRQ), and 466-485 (GRQA…EGRP). The PTAP/PSAP motif signature appears at 108 to 111 (QDNG). Positions 139 to 153 (EPPPYPTSPPPPPAP) are enriched in pro residues. A PPXY motif motif is present at residues 140 to 143 (PPPY). A coiled-coil region spans residues 408–453 (LQDLIKEAEKVYHKRETEEEKQEREKKETEERERRRDRRQEKNLTK). The CCHC-type zinc finger occupies 490-507 (DQCAYCKERGHWARECPR). In terms of domain architecture, Peptidase A2 spans 544-614 (TEFLVDTGAE…CPAPLLGRDL (71 aa)). The Protease; shared with dimeric partner role is filled by Asp-549. A Reverse transcriptase domain is found at 721–912 (LDLGILVPCQ…EEVTYLGYLL (192 aa)). Mg(2+)-binding residues include Asp-789, Asp-863, Asp-864, Asp-1162, Glu-1200, Asp-1221, and Asp-1291. In terms of domain architecture, RNase H type-1 spans 1153–1299 (LPGVPAWYTD…ADEAAKQAAQ (147 aa)). An HHCC-type zinc finger spans residues 1339–1377 (HQLTHLGPDKLLQLVGRTSFHIPNLQSVVREITSKCQVC). The Integrase catalytic domain maps to 1394-1552 (RGDRPGVYWE…TPYEILHGGP (159 aa)). 2 residues coordinate Mg(2+): Asp-1405 and Asp-1464.

As to quaternary structure, homohexamer; further associates as homomultimer. The virus core is composed of a lattice formed from hexagonal rings, each containing six capsid monomers. Interacts (via PPXY motif) with host NEDD4. Interacts (via PSAP motif) with host TSG101. In terms of assembly, the reverse transcriptase is a monomer (Potential). Interacts (via RNase domains) with host release factor ETF1; this interaction is essential for translational readthrough of amber codon between viral gag and pol genes, as well as for viral replication. As to quaternary structure, homodimer. Mg(2+) serves as cofactor. Post-translationally, specific enzymatic cleavages by the viral protease yield mature proteins. The protease is released by autocatalytic cleavage. The polyprotein is cleaved during and after budding, this process is termed maturation. In terms of processing, phosphorylated on serine residues.

It is found in the virion. It localises to the host cell membrane. The protein resides in the host late endosome membrane. The protein localises to the host endosome. Its subcellular location is the host multivesicular body. It is found in the host cytoplasm. The enzyme catalyses DNA(n) + a 2'-deoxyribonucleoside 5'-triphosphate = DNA(n+1) + diphosphate. It carries out the reaction Endonucleolytic cleavage to 5'-phosphomonoester.. Its activity is regulated as follows. Protease: Most efficiently inhibited by Amprenavir, which is able to block Gag-Pol processing in infected cells. In terms of biological role, plays a role in budding and is processed by the viral protease during virion maturation outside the cell. During budding, it recruits, in a PPXY-dependent or independent manner, Nedd4-like ubiquitin ligases that conjugate ubiquitin molecules to Gag-Pol, or to Gag-Pol binding host factors. Interaction with HECT ubiquitin ligases probably links the viral protein to the host ESCRT pathway and facilitates release. Its function is as follows. Targets Gag and gag-pol polyproteins to the plasma membrane via a multipartite membrane binding signal, that includes its myristoylated N-terminus. Also mediates nuclear localization of the pre-integration complex. Constituent of the pre-integration complex (PIC) which tethers the latter to mitotic chromosomes. This allows the integration of the viral genome into the host DNA. Functionally, forms the spherical core of the virion that encapsulates the genomic RNA-nucleocapsid complex. In terms of biological role, involved in the packaging and encapsidation of two copies of the genome. Binds with high affinity to conserved UCUG elements within the packaging signal, located near the 5'-end of the genome. This binding is dependent on genome dimerization. Acts as a nucleic acid chaperone which is involved in rearrangement of nucleic acid secondary structures during gRNA retrotranscription. Its function is as follows. Protease: The aspartyl protease mediates proteolytic cleavages of Gag and Gag-Pol polyproteins during or shortly after the release of the virion from the plasma membrane. Cleavages take place as an ordered, step-wise cascade to yield mature proteins. This process is called maturation. Displays maximal activity during the budding process just prior to particle release from the cell. Reverse transcriptase/ribonuclease H: RT is a multifunctional enzyme that converts the viral dimeric RNA genome into dsDNA in the cytoplasm, shortly after virus entry into the cell. This enzyme displays a DNA polymerase activity that can copy either DNA or RNA templates, and a ribonuclease H (RNase H) activity that cleaves the RNA strand of RNA-DNA heteroduplexes in a partially processive 3' to 5' endonucleasic mode. Conversion of viral genomic RNA into dsDNA requires many steps. A tRNA binds to the primer-binding site (PBS) situated at the 5' end of the viral RNA. RT uses the 3' end of the tRNA primer to perform a short round of RNA-dependent minus-strand DNA synthesis. The reading proceeds through the U5 region and ends after the repeated (R) region which is present at both ends of viral RNA. The portion of the RNA-DNA heteroduplex is digested by the RNase H, resulting in a ssDNA product attached to the tRNA primer. This ssDNA/tRNA hybridizes with the identical R region situated at the 3' end of viral RNA. This template exchange, known as minus-strand DNA strong stop transfer, can be either intra- or intermolecular. RT uses the 3' end of this newly synthesized short ssDNA to perform the RNA-dependent minus-strand DNA synthesis of the whole template. RNase H digests the RNA template except for a polypurine tract (PPT) situated at the 5' end of the genome. It is not clear if both polymerase and RNase H activities are simultaneous. RNase H probably can proceed both in a polymerase-dependent (RNA cut into small fragments by the same RT performing DNA synthesis) and a polymerase-independent mode (cleavage of remaining RNA fragments by free RTs). Secondly, RT performs DNA-directed plus-strand DNA synthesis using the PPT that has not been removed by RNase H as primers. PPT and tRNA primers are then removed by RNase H. The 3' and 5' ssDNA PBS regions hybridize to form a circular dsDNA intermediate. Strand displacement synthesis by RT to the PBS and PPT ends produces a blunt ended, linear dsDNA copy of the viral genome that includes long terminal repeats (LTRs) at both ends. Functionally, catalyzes viral DNA integration into the host chromosome, by performing a series of DNA cutting and joining reactions. This enzyme activity takes place after virion entry into a cell and reverse transcription of the RNA genome in dsDNA. The first step in the integration process is 3' processing. This step requires a complex comprising the viral genome, matrix protein and integrase. This complex is called the pre-integration complex (PIC). The integrase protein removes 2 nucleotides from each 3' end of the viral DNA, leaving recessed CA OH's at the 3' ends. In the second step that requires cell division, the PIC enters cell nucleus. In the third step, termed strand transfer, the integrase protein joins the previously processed 3' ends to the 5' ends of strands of target cellular DNA at the site of integration. The last step is viral DNA integration into host chromosome. The protein is Gag-Pol polyprotein (pro-pol) of Phascolarctos cinereus (Koala).